Here is a 232-residue protein sequence, read N- to C-terminus: Large ribosomal subunit protein uL1 (232 aa).

The protein belongs to the universal ribosomal protein uL1 family. Part of the 50S ribosomal subunit.

Functionally, binds directly to 23S rRNA. The L1 stalk is quite mobile in the ribosome, and is involved in E site tRNA release. In terms of biological role, protein L1 is also a translational repressor protein, it controls the translation of the L11 operon by binding to its mRNA. This chain is Large ribosomal subunit protein uL1, found in Bacillus velezensis (strain DSM 23117 / BGSC 10A6 / LMG 26770 / FZB42) (Bacillus amyloliquefaciens subsp. plantarum).